A 203-amino-acid polypeptide reads, in one-letter code: uncharacterized protein (203 aa).

2 disordered regions span residues 65–84 and 92–170; these read LSLS…SFDS and SSSS…ETAL. Composition is skewed to acidic residues over residues 68–82 and 98–110; these read SEDE…EDSF and SEEE…EESL. Over residues 111 to 122 the composition is skewed to low complexity; the sequence is DSSFLVSASLSL. The segment covering 123–168 has biased composition (acidic residues); that stretch reads SEDDEEEDSESEDEDEDEDSDSDSDSDSDSDEDEDEDEDSEEEEET. The chain crosses the membrane as a helical span at residues 182-202; sequence TSFLLPFTLVVLAILFYPAWV.

The protein localises to the membrane. This is an uncharacterized protein from Saccharomyces cerevisiae (strain ATCC 204508 / S288c) (Baker's yeast).